The chain runs to 362 residues: Peptide chain release factor 1 (362 aa).

Residue Gln-237 is modified to N5-methylglutamine. Basic and acidic residues predominate over residues 284–295 (EEEKRQAEETST). The disordered stretch occupies residues 284-304 (EEEKRQAEETSTRRNLVASGD).

Belongs to the prokaryotic/mitochondrial release factor family. Post-translationally, methylated by PrmC. Methylation increases the termination efficiency of RF1.

Its subcellular location is the cytoplasm. Functionally, peptide chain release factor 1 directs the termination of translation in response to the peptide chain termination codons UAG and UAA. The polypeptide is Peptide chain release factor 1 (Pseudoalteromonas atlantica (strain T6c / ATCC BAA-1087)).